Reading from the N-terminus, the 889-residue chain is DNA gyrase subunit A (889 aa).

The Topo IIA-type catalytic domain maps to Leu35–Leu501. Catalysis depends on Tyr123, which acts as the O-(5'-phospho-DNA)-tyrosine intermediate. The GyrA-box motif lies at Gln528–Gly534. A disordered region spans residues Lys811–Glu889. Over residues Asp813–Gln823 the composition is skewed to acidic residues. Residues Asp863–Arg875 are compositionally biased toward basic and acidic residues. Positions Val876–Glu889 are enriched in acidic residues.

The protein belongs to the type II topoisomerase GyrA/ParC subunit family. As to quaternary structure, heterotetramer, composed of two GyrA and two GyrB chains. In the heterotetramer, GyrA contains the active site tyrosine that forms a transient covalent intermediate with DNA, while GyrB binds cofactors and catalyzes ATP hydrolysis.

It is found in the cytoplasm. It catalyses the reaction ATP-dependent breakage, passage and rejoining of double-stranded DNA.. In terms of biological role, a type II topoisomerase that negatively supercoils closed circular double-stranded (ds) DNA in an ATP-dependent manner to modulate DNA topology and maintain chromosomes in an underwound state. Negative supercoiling favors strand separation, and DNA replication, transcription, recombination and repair, all of which involve strand separation. Also able to catalyze the interconversion of other topological isomers of dsDNA rings, including catenanes and knotted rings. Type II topoisomerases break and join 2 DNA strands simultaneously in an ATP-dependent manner. The sequence is that of DNA gyrase subunit A from Staphylococcus aureus (strain Mu50 / ATCC 700699).